A 281-amino-acid polypeptide reads, in one-letter code: Lipoyl synthase (281 aa).

Cysteine 35, cysteine 40, cysteine 46, cysteine 61, cysteine 65, cysteine 68, and serine 274 together coordinate [4Fe-4S] cluster. The Radical SAM core domain occupies 47–263; the sequence is FGCGQATFLI…RDEALALGFR (217 aa).

This sequence belongs to the radical SAM superfamily. Lipoyl synthase family. It depends on [4Fe-4S] cluster as a cofactor.

It is found in the cytoplasm. The enzyme catalyses [[Fe-S] cluster scaffold protein carrying a second [4Fe-4S](2+) cluster] + N(6)-octanoyl-L-lysyl-[protein] + 2 oxidized [2Fe-2S]-[ferredoxin] + 2 S-adenosyl-L-methionine + 4 H(+) = [[Fe-S] cluster scaffold protein] + N(6)-[(R)-dihydrolipoyl]-L-lysyl-[protein] + 4 Fe(3+) + 2 hydrogen sulfide + 2 5'-deoxyadenosine + 2 L-methionine + 2 reduced [2Fe-2S]-[ferredoxin]. It participates in protein modification; protein lipoylation via endogenous pathway; protein N(6)-(lipoyl)lysine from octanoyl-[acyl-carrier-protein]: step 2/2. In terms of biological role, catalyzes the radical-mediated insertion of two sulfur atoms into the C-6 and C-8 positions of the octanoyl moiety bound to the lipoyl domains of lipoate-dependent enzymes, thereby converting the octanoylated domains into lipoylated derivatives. This Trichlorobacter lovleyi (strain ATCC BAA-1151 / DSM 17278 / SZ) (Geobacter lovleyi) protein is Lipoyl synthase.